A 509-amino-acid polypeptide reads, in one-letter code: MEEFQRYIELDRSWQHNFVYPLIFQEYIYGFAYDHGLNKYILLENAGDKKYSLLIVKRLINRMYQQTHWILFANHSNQNDFFGHKHKKNLYYQIISEGFAVIVEIPFSPLLISSLEAKEKKIVKSHNLRSIHSIFPFFEDKFLHLNYVLEILIPYPIHLEILVQTLRYWVKDASSLHLLRFFLYEYRNWNSLITPQKSISIFSKRNQRLFLFLYNFHVCEYESIFVFLCNQSSHLRSTSFGALLERNYFYGKLEYLVKVFTFTKDFCVILWLLKDPFLHYVRYRGKSILASKGTPLLMHKWKYFLFNFWQCHFSLWSPPRRIYINRLSKHSLDFMGFFSSVRLNSSVVRSQMVENSFLIDNPIKKFDTIVRIIPLVGSLAKAKFCNVLGHPISKSVWTDLLDSDIMDRFGRICRNLSHYYSGSSRKKSLYRIKYILRLSCARTLARKHKSTVRAFLKRLGSEFLEEFFTEEEKVLSLILPRDSSISRGLYRGPFWYLDIICIHDLANDE.

Belongs to the intron maturase 2 family. MatK subfamily.

It is found in the plastid. It localises to the chloroplast. Functionally, usually encoded in the trnK tRNA gene intron. Probably assists in splicing its own and other chloroplast group II introns. The polypeptide is Maturase K (Schlumbergera truncata (Thanksgiving cactus)).